We begin with the raw amino-acid sequence, 69 residues long: Putative membrane protein insertion efficiency factor (69 aa).

It belongs to the UPF0161 family.

The protein localises to the cell membrane. Could be involved in insertion of integral membrane proteins into the membrane. The polypeptide is Putative membrane protein insertion efficiency factor (Clostridium beijerinckii (strain ATCC 51743 / NCIMB 8052) (Clostridium acetobutylicum)).